Reading from the N-terminus, the 90-residue chain is Phosphocarrier protein HPr (90 aa).

The HPr domain occupies 1–89 (MPALEITIIN…ELINNRFDEG (89 aa)). Histidine 15 functions as the Pros-phosphohistidine intermediate in the catalytic mechanism.

This sequence belongs to the HPr family.

It is found in the cytoplasm. General (non sugar-specific) component of the phosphoenolpyruvate-dependent sugar phosphotransferase system (sugar PTS). This major carbohydrate active-transport system catalyzes the phosphorylation of incoming sugar substrates concomitantly with their translocation across the cell membrane. The phosphoryl group from phosphoenolpyruvate (PEP) is transferred to the phosphoryl carrier protein HPr by enzyme I. Phospho-HPr then transfers it to the PTS EIIA domain. The polypeptide is Phosphocarrier protein HPr (ptsH) (Pseudomonas aeruginosa (strain ATCC 15692 / DSM 22644 / CIP 104116 / JCM 14847 / LMG 12228 / 1C / PRS 101 / PAO1)).